Consider the following 248-residue polypeptide: Transcription factor MYB1 (248 aa).

2 consecutive HTH myb-type domains span residues 9 to 61 and 62 to 116; these read KEGM…LNYL and RPGI…GRRV. DNA-binding regions (H-T-H motif) lie at residues 37–61 and 89–112; these read WRSLPKRAGLKRCGKSCRLRWLNYL and WSLIAGRLPGRTDNEIKNYWNTNL. Positions 118-144 are disordered; sequence DQSHQHCRPNPTITSTKPADAPPANAN.

It localises to the nucleus. Functionally, transcription activator involved in the spatiotemporal regulation of flavonoid biosynthesis specifically in the corms of Montbretia. Activates the promoters of enzymes involved in the biosynthesis of the flavonol kaempferol and the flavonol-glycoside kaempferol-rhamnoside. The protein is Transcription factor MYB1 of Crocosmia x crocosmiiflora (Montbretia).